Here is a 410-residue protein sequence, read N- to C-terminus: Arginine deiminase (410 aa).

The Amidino-cysteine intermediate role is filled by Cys399.

Belongs to the arginine deiminase family.

Its subcellular location is the cytoplasm. The catalysed reaction is L-arginine + H2O = L-citrulline + NH4(+). It functions in the pathway amino-acid degradation; L-arginine degradation via ADI pathway; carbamoyl phosphate from L-arginine: step 1/2. This is Arginine deiminase from Treponema denticola (strain ATCC 35405 / DSM 14222 / CIP 103919 / JCM 8153 / KCTC 15104).